The sequence spans 70 residues: Large ribosomal subunit protein eL38 (70 aa).

The protein belongs to the eukaryotic ribosomal protein eL38 family.

The protein is Large ribosomal subunit protein eL38 (rpl-38) of Ostertagia ostertagi (Brown stomach worm).